We begin with the raw amino-acid sequence, 372 residues long: Carbamoyl phosphate synthase small chain (372 aa).

The interval 1 to 179 (MRAILALEDG…ALVTGKTLPP (179 aa)) is CPSase. Residues serine 45, glycine 231, and glycine 233 each contribute to the L-glutamine site. Residues 183–369 (DIVAFDFGIK…RKMIAASKRQ (187 aa)) form the Glutamine amidotransferase type-1 domain. The Nucleophile role is filled by cysteine 258. Residues leucine 259, glutamine 262, asparagine 300, glycine 302, and phenylalanine 303 each coordinate L-glutamine. Catalysis depends on residues histidine 342 and glutamate 344.

This sequence belongs to the CarA family. In terms of assembly, composed of two chains; the small (or glutamine) chain promotes the hydrolysis of glutamine to ammonia, which is used by the large (or ammonia) chain to synthesize carbamoyl phosphate. Tetramer of heterodimers (alpha,beta)4.

It carries out the reaction hydrogencarbonate + L-glutamine + 2 ATP + H2O = carbamoyl phosphate + L-glutamate + 2 ADP + phosphate + 2 H(+). It catalyses the reaction L-glutamine + H2O = L-glutamate + NH4(+). Its pathway is amino-acid biosynthesis; L-arginine biosynthesis; carbamoyl phosphate from bicarbonate: step 1/1. It participates in pyrimidine metabolism; UMP biosynthesis via de novo pathway; (S)-dihydroorotate from bicarbonate: step 1/3. Functionally, small subunit of the glutamine-dependent carbamoyl phosphate synthetase (CPSase). CPSase catalyzes the formation of carbamoyl phosphate from the ammonia moiety of glutamine, carbonate, and phosphate donated by ATP, constituting the first step of 2 biosynthetic pathways, one leading to arginine and/or urea and the other to pyrimidine nucleotides. The small subunit (glutamine amidotransferase) binds and cleaves glutamine to supply the large subunit with the substrate ammonia. This Akkermansia muciniphila (strain ATCC BAA-835 / DSM 22959 / JCM 33894 / BCRC 81048 / CCUG 64013 / CIP 107961 / Muc) protein is Carbamoyl phosphate synthase small chain.